The following is a 969-amino-acid chain: Isoleucine--tRNA ligase (969 aa).

Positions 68-78 (PYANGNLHMGH) match the 'HIGH' region motif. E584 contributes to the L-isoleucyl-5'-AMP binding site. The short motif at 625–629 (KMSKS) is the 'KMSKS' region element. K628 is an ATP binding site. Residues C938, C941, C958, and C961 each coordinate Zn(2+).

It belongs to the class-I aminoacyl-tRNA synthetase family. IleS type 1 subfamily. In terms of assembly, monomer. Zn(2+) is required as a cofactor.

It is found in the cytoplasm. It catalyses the reaction tRNA(Ile) + L-isoleucine + ATP = L-isoleucyl-tRNA(Ile) + AMP + diphosphate. Functionally, catalyzes the attachment of isoleucine to tRNA(Ile). As IleRS can inadvertently accommodate and process structurally similar amino acids such as valine, to avoid such errors it has two additional distinct tRNA(Ile)-dependent editing activities. One activity is designated as 'pretransfer' editing and involves the hydrolysis of activated Val-AMP. The other activity is designated 'posttransfer' editing and involves deacylation of mischarged Val-tRNA(Ile). This chain is Isoleucine--tRNA ligase, found in Prochlorococcus marinus (strain SARG / CCMP1375 / SS120).